The primary structure comprises 163 residues: MVFVKTLNRTLYLEVAANEDVLSIKQKIEAAEGIPSAEQRLVFAGRQLEDSDCGLDAEATIYVNLELLGGAKKRKKKVYTTPKKNKRKPKKVKLAVLKYYKVDENGKITRLRKECQQPSCGGGVFMAQHANRHYCGRCHDTLVVDTATAAATSGEKGGKKGKK.

The 70-residue stretch at 1–70 folds into the Ubiquitin-like domain; sequence MVFVKTLNRT…IYVNLELLGG (70 aa). G70 participates in a covalent cross-link: Glycyl lysine isopeptide (Gly-Lys) (interchain with K-? in acceptor proteins). A C4-type zinc finger spans residues 115–138; that stretch reads CQQPSCGGGVFMAQHANRHYCGRC.

In the N-terminal section; belongs to the ubiquitin family. The protein in the C-terminal section; belongs to the eukaryotic ribosomal protein eS31 family.

The sequence is that of Ubiquitin-like protein 1-ribosomal protein eS31 fusion protein (ubl-1) from Caenorhabditis briggsae.